Consider the following 275-residue polypeptide: Expansin-B6 (275 aa).

The first 25 residues, 1-25 (MAARMGSKVAAILAILSVLVVHGSC), serve as a signal peptide directing secretion. Asn33 carries N-linked (GlcNAc...) asparagine glycosylation. An Expansin-like EG45 domain is found at 64–170 (GGACGFKNVN…RRVPCNYPGL (107 aa)). Disulfide bonds link Cys67/Cys95, Cys98/Cys165, and Cys103/Cys109. Residues 183–270 (VYFAVLVEYE…NWSPNSNYRS (88 aa)) enclose the Expansin-like CBD domain.

Belongs to the expansin family. Expansin B subfamily. In terms of tissue distribution, expressed in internodes.

It is found in the secreted. The protein localises to the cell wall. The protein resides in the membrane. Functionally, may cause loosening and extension of plant cell walls by disrupting non-covalent bonding between cellulose microfibrils and matrix glucans. No enzymatic activity has been found. May be required for rapid internodal elongation in deepwater rice during submergence. The protein is Expansin-B6 (EXPB6) of Oryza sativa subsp. japonica (Rice).